Reading from the N-terminus, the 92-residue chain is Cell division protein FtsB (92 aa).

The Cytoplasmic segment spans residues 1–3 (MKW). The chain crosses the membrane as a helical span at residues 4–21 (VTVVLSFALVCCQYSLWF). Over 22–92 (GKGSIGRNSS…TFYRLIRHNR (71 aa)) the chain is Periplasmic. Residues 28 to 50 (RNSSLREQIAVQEEKNQTLALRN) are a coiled coil.

It belongs to the FtsB family. Part of a complex composed of FtsB, FtsL and FtsQ.

It localises to the cell inner membrane. In terms of biological role, essential cell division protein. May link together the upstream cell division proteins, which are predominantly cytoplasmic, with the downstream cell division proteins, which are predominantly periplasmic. This chain is Cell division protein FtsB, found in Neisseria meningitidis serogroup C (strain 053442).